The sequence spans 681 residues: MQKGNIGVTTENIFPIIKKFLYSDHEIFLRELVSNAVDATQKLNTLASISEFKGELGDLTVHVSLGKDTITISDRGIGLTAEEIDKYINQIAFSGANDFLEKYKNDANAIIGHFGLGFYSAFMVSKKVEIITKSYKEGAQAVKWTCDGSPEFTLEEVEKADRGTDIVLYIDDDCKEFLEESRISALLKKYCSFLPVPIAFGKKKEWKDGKQVETAEDNVINDTIPLWTKKPSELSDEDYKKFYRELYPMSDEPLFWIHLNVDYPFHLTGILYFPKVKSNIDLNKNKIQLYCNQVYVTDSVEGIVPDFLTLLHGVLDSPDIPLNVSRSYLQSDSNVKKISTYISKKVSDRLQSIFKNDRAQFEEKWNDLKIFINYGMLTQEDFYDKAQKFALFTDTDGKYYTFEEYQTLIKDNQTDKDKNLIYLYANNKDEQFAYIEAAKNKGYNVLLMDGQLDVAMVSMLEQKLEKSRFTRVDSDVVDNLIVKEDKKSDVLEASKQEALSAAFKSQLPKMEKVEFNVMTQALGENGSPVMITQSEYMRRMKEMANIQAGMSFYGEMPDMFNLVLNSDHKLVKEVLADEEKECSAAIAPIQTELEDVTKRRDALKKKQEGKKDEDIPTVEKDELNDLDKKWDELKQQKDSIFAGYAGKNKVVRQLIDLALLQNNMLKGEALNNFVKRSIELI.

Positions 1 to 326 (MQKGNIGVTT…SPDIPLNVSR (326 aa)) are a; substrate-binding. The tract at residues 327 to 545 (SYLQSDSNVK…YMRRMKEMAN (219 aa)) is b. The segment at 546–681 (IQAGMSFYGE…NFVKRSIELI (136 aa)) is c.

The protein belongs to the heat shock protein 90 family. As to quaternary structure, homodimer.

Its subcellular location is the cytoplasm. Its function is as follows. Molecular chaperone. Has ATPase activity. The chain is Chaperone protein htpG from Bacteroides fragilis (strain YCH46).